The sequence spans 86 residues: Anti-adapter protein IraP (86 aa).

A coiled-coil region spans residues 1–36; it reads MKNLISELLLRLAQKEEESKELVAQVEALEIIVTAM.

The protein belongs to the IraP family. As to quaternary structure, interacts with RssB.

Its subcellular location is the cytoplasm. Functionally, inhibits RpoS proteolysis by regulating RssB activity, thereby increasing the stability of the sigma stress factor RpoS especially during phosphate starvation, but also in stationary phase and during nitrogen starvation. Its effect on RpoS stability is due to its interaction with RssB, which probably blocks the interaction of RssB with RpoS, and the consequent delivery of the RssB-RpoS complex to the ClpXP protein degradation pathway. The protein is Anti-adapter protein IraP of Citrobacter koseri (strain ATCC BAA-895 / CDC 4225-83 / SGSC4696).